We begin with the raw amino-acid sequence, 132 residues long: Fluoride-specific ion channel FluC 1 (132 aa).

Helical transmembrane passes span 11–31 (AVFAGGALGALARAALSALAI), 37–57 (WPWPTFTVNVVGAFLVGYFTT), 70–92 (RPLLGTGLCGGLTTFSTMQVETI), and 105–125 (AYSVVSITLGLLAVHLATVLV). Na(+) is bound by residues G79 and T82.

This sequence belongs to the fluoride channel Fluc/FEX (TC 1.A.43) family.

The protein resides in the cell membrane. It carries out the reaction fluoride(in) = fluoride(out). Na(+) is not transported, but it plays an essential structural role and its presence is essential for fluoride channel function. Functionally, fluoride-specific ion channel. Important for reducing fluoride concentration in the cell, thus reducing its toxicity. The protein is Fluoride-specific ion channel FluC 1 of Mycobacterium bovis (strain ATCC BAA-935 / AF2122/97).